The following is a 257-amino-acid chain: NAD-capped RNA hydrolase NudC (257 aa).

Substrate contacts are provided by Lys25 and Arg69. Positions 98 and 101 each coordinate Zn(2+). Glu111 is a substrate binding site. Zn(2+) contacts are provided by Cys116 and Cys119. A substrate-binding site is contributed by Tyr124. One can recognise a Nudix hydrolase domain in the interval 125 to 248; that stretch reads PQIAPCIIVA…TVARRLIEDT (124 aa). The a divalent metal cation site is built by Ala158, Glu174, and Glu178. The Nudix box signature appears at 159–180; it reads GFVEVGETLEQAVAREVMEESG. 192–199 is a binding site for substrate; it reads QPWPFPQS. Residue Glu219 participates in a divalent metal cation binding. Residue Ala241 participates in substrate binding.

The protein belongs to the Nudix hydrolase family. NudC subfamily. As to quaternary structure, homodimer. Requires Mg(2+) as cofactor. It depends on Mn(2+) as a cofactor. The cofactor is Zn(2+).

It carries out the reaction a 5'-end NAD(+)-phospho-ribonucleoside in mRNA + H2O = a 5'-end phospho-adenosine-phospho-ribonucleoside in mRNA + beta-nicotinamide D-ribonucleotide + 2 H(+). The enzyme catalyses NAD(+) + H2O = beta-nicotinamide D-ribonucleotide + AMP + 2 H(+). It catalyses the reaction NADH + H2O = reduced beta-nicotinamide D-ribonucleotide + AMP + 2 H(+). MRNA decapping enzyme that specifically removes the nicotinamide adenine dinucleotide (NAD) cap from a subset of mRNAs by hydrolyzing the diphosphate linkage to produce nicotinamide mononucleotide (NMN) and 5' monophosphate mRNA. The NAD-cap is present at the 5'-end of some mRNAs and stabilizes RNA against 5'-processing. Has preference for mRNAs with a 5'-end purine. Catalyzes the hydrolysis of a broad range of dinucleotide pyrophosphates. The sequence is that of NAD-capped RNA hydrolase NudC from Escherichia coli O7:K1 (strain IAI39 / ExPEC).